A 222-amino-acid polypeptide reads, in one-letter code: Millepora cytotoxin-1 (222 aa).

Positions 1–20 are cleaved as a signal peptide; the sequence is MVTLYLHVPILLLVVITARA. The propeptide occupies 21–75; it reads APKPDTHNPFDELSSVAEKQDLHYGDRSRKDPFIAQNDVGNNFRDGTQENLTKVR. Cystine bridges form between Cys-89-Cys-115, Cys-142-Cys-168, and Cys-179-Cys-222. 3 consecutive repeats follow at residues 100-109, 153-162, and 206-215; these read SIHDNHYEDR, SIHDNYYEDR, and SQHNNYYEDR.

Belongs to the dermatopontin family. In terms of processing, is not glycosylated.

It is found in the secreted. Its subcellular location is the nematocyst. Is potently cytotoxic (EC(50) value 79 ng/mL) towards L1210 mouse leukemia cells, has hemagglutination activity on sheep erythrocytes, and is lethal in crayfish. Has no phospholipase A2 activity. In Millepora dichotoma (Net fire coral), this protein is Millepora cytotoxin-1.